We begin with the raw amino-acid sequence, 81 residues long: Small ribosomal subunit protein bS16 (81 aa).

The protein belongs to the bacterial ribosomal protein bS16 family.

This chain is Small ribosomal subunit protein bS16, found in Clostridium beijerinckii (strain ATCC 51743 / NCIMB 8052) (Clostridium acetobutylicum).